A 782-amino-acid polypeptide reads, in one-letter code: General transcription and DNA repair factor IIH helicase/translocase subunit XPB (782 aa).

Over residues Met1–Lys11 the composition is skewed to basic and acidic residues. Disordered stretches follow at residues Met1–Ser47 and Thr211–Gln242. The Nuclear localization signal motif lies at Lys6 to Tyr17. Over residues Glu19 to Ile28 the composition is skewed to acidic residues. Positions Thr211–Gln223 are enriched in low complexity. Positions Asp224 to Gln242 are enriched in polar residues. Residues Met326–Leu487 enclose the Helicase ATP-binding domain. Leu339–Ser346 serves as a coordination point for ATP. Positions Asp440–His443 match the DEVH box motif. A Helicase C-terminal domain is found at Arg541 to Met701.

It belongs to the helicase family. RAD25/XPB subfamily. Component of the 7-subunit TFIIH core complex composed of XPB/ERCC3, XPD/ERCC2, GTF2H1, GTF2H2, GTF2H3, GTF2H4 and GTF2H5, which is active in NER. The core complex associates with the 3-subunit CDK-activating kinase (CAK) module composed of CCNH/cyclin H, CDK7 and MNAT1 to form the 10-subunit holoenzyme (holo-TFIIH) active in transcription. Interacts with PUF60. Interacts with ATF7IP. Interacts with Epstein-Barr virus EBNA2.

The protein resides in the nucleus. It carries out the reaction Couples ATP hydrolysis with the unwinding of duplex DNA by translocating in the 3'-5' direction.. The enzyme catalyses ATP + H2O = ADP + phosphate + H(+). Its function is as follows. ATP-dependent 3'-5' DNA helicase/translocase; binds dsDNA rather than ssDNA, unzipping it in a translocase rather than classical helicase activity. Component of the general transcription and DNA repair factor IIH (TFIIH) core complex. When complexed to CDK-activating kinase (CAK), involved in RNA transcription by RNA polymerase II. The ATPase activity of XPB/ERCC3, but not its helicase activity, is required for DNA opening; it may wrap around the damaged DNA wedging it open, causing localized melting and twisting that allows XPD/ERCC2 helicase to anchor. The ATP-dependent helicase activity of XPB/ERCC3 may be required for promoter escape. Also involved in transcription-coupled nucleotide excision repair (NER) of damaged DNA. In NER, TFIIH acts by opening DNA around the lesion to allow the excision of the damaged oligonucleotide and its replacement by a new DNA fragment. This chain is General transcription and DNA repair factor IIH helicase/translocase subunit XPB (ercc3), found in Danio rerio (Zebrafish).